Here is a 552-residue protein sequence, read N- to C-terminus: Transcription factor lcsF (552 aa).

Disordered regions lie at residues 1–132, 169–209, 232–258, and 297–349; these read MAPA…DLDP, TSSY…ASLS, EATS…HWSS, and ELTS…QHGA. Residues 31-55 form a basic motif region; sequence KDRKEKKRIQNRVAQRSYRSRMKAR. Residues 31–76 form the bZIP domain; sequence KDRKEKKRIQNRVAQRSYRSRMKARLGELQSRLQAHEEQKAKEEAE. Residues 56 to 63 are leucine-zipper; it reads LGELQSRL. A compositionally biased stretch (basic and acidic residues) spans 64–79; that stretch reads QAHEEQKAKEEAERCD. 2 stretches are compositionally biased toward polar residues: residues 98 to 119 and 169 to 186; these read TPPS…NSAS and TSSY…SLSQ. Residues 298 to 347 show a composition bias toward polar residues; that stretch reads LTSTGDLPNATWRPSQQFSGPETTPRSHNAENPTQQQSPINDDTPSTTQH.

This sequence belongs to the bZIP family.

The protein localises to the nucleus. Its function is as follows. Transcription factor that regulates the expression of the gene cluster that mediates the biosynthesis of the lipopeptide antibiotics leucinostatins that show extensive biological activities, including antimalarial, antiviral, antibacterial, antifungal, and antitumor activities, as well as phytotoxic. All 20 genes in the cluster are up-regulated to some extent by lcsF, with the exception of lcsL and lcsP, which are down-regulated. This Purpureocillium lilacinum (Paecilomyces lilacinus) protein is Transcription factor lcsF.